Reading from the N-terminus, the 111-residue chain is Anti-adapter protein IraM (111 aa).

The protein belongs to the IraM/RssC family.

It localises to the cytoplasm. Its function is as follows. Involved in the stabilization of the sigma stress factor RpoS. The protein is Anti-adapter protein IraM of Cronobacter sakazakii (strain ATCC BAA-894) (Enterobacter sakazakii).